We begin with the raw amino-acid sequence, 178 residues long: Protein GrpE (178 aa).

Positions 1–22 are disordered; that stretch reads MSENQNPSPSPEEIEAAMSANA.

Belongs to the GrpE family. In terms of assembly, homodimer.

The protein resides in the cytoplasm. Functionally, participates actively in the response to hyperosmotic and heat shock by preventing the aggregation of stress-denatured proteins, in association with DnaK and GrpE. It is the nucleotide exchange factor for DnaK and may function as a thermosensor. Unfolded proteins bind initially to DnaJ; upon interaction with the DnaJ-bound protein, DnaK hydrolyzes its bound ATP, resulting in the formation of a stable complex. GrpE releases ADP from DnaK; ATP binding to DnaK triggers the release of the substrate protein, thus completing the reaction cycle. Several rounds of ATP-dependent interactions between DnaJ, DnaK and GrpE are required for fully efficient folding. The protein is Protein GrpE of Acidovorax ebreus (strain TPSY) (Diaphorobacter sp. (strain TPSY)).